A 175-amino-acid polypeptide reads, in one-letter code: NADH-quinone oxidoreductase subunit I 1 (175 aa).

4Fe-4S ferredoxin-type domains are found at residues 44-74 and 90-119; these read LNRWPDGLEKCIGCELCAWACPADAIFVESA and RVYQINYLRCIGCGFCIEACPTRALTMIND. [4Fe-4S] cluster-binding residues include Cys-54, Cys-57, Cys-60, Cys-64, Cys-99, Cys-102, Cys-105, and Cys-109.

It belongs to the complex I 23 kDa subunit family. As to quaternary structure, NDH-1 is composed of 14 different subunits. Subunits NuoA, H, J, K, L, M, N constitute the membrane sector of the complex. Requires [4Fe-4S] cluster as cofactor.

The protein resides in the cell membrane. It carries out the reaction a quinone + NADH + 5 H(+)(in) = a quinol + NAD(+) + 4 H(+)(out). In terms of biological role, NDH-1 shuttles electrons from NADH, via FMN and iron-sulfur (Fe-S) centers, to quinones in the respiratory chain. The immediate electron acceptor for the enzyme in this species is believed to be menaquinone. Couples the redox reaction to proton translocation (for every two electrons transferred, four hydrogen ions are translocated across the cytoplasmic membrane), and thus conserves the redox energy in a proton gradient. The protein is NADH-quinone oxidoreductase subunit I 1 of Mycolicibacterium paratuberculosis (strain ATCC BAA-968 / K-10) (Mycobacterium paratuberculosis).